The following is a 144-amino-acid chain: MRLNTLSPAEGAKHAPKRVGRGIGSGLGKTGGRGHKGQKSRSGGGVRRGFEGGQIPLYRRLPKFGFTSRKAMITAEVRLSELALVEGDVIDLNTLKAANVVGIQIEFVKVILSGEVARPVTLRGLRVTKGARAAIEAAGGKIEE.

A disordered region spans residues 1–52 (MRLNTLSPAEGAKHAPKRVGRGIGSGLGKTGGRGHKGQKSRSGGGVRRGFEG). Over residues 21 to 31 (RGIGSGLGKTG) the composition is skewed to gly residues.

This sequence belongs to the universal ribosomal protein uL15 family. Part of the 50S ribosomal subunit.

Functionally, binds to the 23S rRNA. The sequence is that of Large ribosomal subunit protein uL15 from Buchnera aphidicola subsp. Acyrthosiphon kondoi (Acyrthosiphon kondoi symbiotic bacterium).